The chain runs to 372 residues: Alanine racemase (372 aa).

The active-site Proton acceptor; specific for D-alanine is Lys-37. Position 37 is an N6-(pyridoxal phosphate)lysine (Lys-37). Arg-136 is a binding site for substrate. Tyr-265 acts as the Proton acceptor; specific for L-alanine in catalysis. Met-313 contacts substrate.

The protein belongs to the alanine racemase family. Pyridoxal 5'-phosphate serves as cofactor.

The enzyme catalyses L-alanine = D-alanine. It functions in the pathway amino-acid biosynthesis; D-alanine biosynthesis; D-alanine from L-alanine: step 1/1. Catalyzes the interconversion of L-alanine and D-alanine. May also act on other amino acids. The polypeptide is Alanine racemase (alr) (Synechocystis sp. (strain ATCC 27184 / PCC 6803 / Kazusa)).